We begin with the raw amino-acid sequence, 152 residues long: uncharacterized protein (152 aa).

The signal sequence occupies residues 1–23 (MYSILIACLVLLLCLVIYVGHRA).

It belongs to the asfivirus EP152R family.

The protein resides in the virion. This is an uncharacterized protein from Ornithodoros (relapsing fever ticks).